The chain runs to 207 residues: Octanoyltransferase (207 aa).

The 176-residue stretch at 29–204 (AETRDELWVV…HLERHLSTSK (176 aa)) folds into the BPL/LPL catalytic domain. Substrate-binding positions include 68-75 (RGGQITYH), 135-137 (SLG), and 148-150 (GLS). The active-site Acyl-thioester intermediate is the Cys166.

The protein belongs to the LipB family.

The protein localises to the cytoplasm. The catalysed reaction is octanoyl-[ACP] + L-lysyl-[protein] = N(6)-octanoyl-L-lysyl-[protein] + holo-[ACP] + H(+). It participates in protein modification; protein lipoylation via endogenous pathway; protein N(6)-(lipoyl)lysine from octanoyl-[acyl-carrier-protein]: step 1/2. Its function is as follows. Catalyzes the transfer of endogenously produced octanoic acid from octanoyl-acyl-carrier-protein onto the lipoyl domains of lipoate-dependent enzymes. Lipoyl-ACP can also act as a substrate although octanoyl-ACP is likely to be the physiological substrate. The sequence is that of Octanoyltransferase from Chromobacterium violaceum (strain ATCC 12472 / DSM 30191 / JCM 1249 / CCUG 213 / NBRC 12614 / NCIMB 9131 / NCTC 9757 / MK).